Reading from the N-terminus, the 71-residue chain is Large ribosomal subunit protein bL31 (71 aa).

Zn(2+) is bound by residues cysteine 16, cysteine 18, cysteine 37, and cysteine 40.

The protein belongs to the bacterial ribosomal protein bL31 family. Type A subfamily. Part of the 50S ribosomal subunit. Zn(2+) serves as cofactor.

In terms of biological role, binds the 23S rRNA. This is Large ribosomal subunit protein bL31 from Chromohalobacter salexigens (strain ATCC BAA-138 / DSM 3043 / CIP 106854 / NCIMB 13768 / 1H11).